Reading from the N-terminus, the 399-residue chain is MMRASYLFTSESVSEGHPDKVCDRISDEIVDLFYREGPKAGIDPWQIRAACETLATTNKVVIAGETRGPSSVTNEHIEHVVREAIKDIGYEQEGFHWKTCDIEILLHPQSADIAQGVDALQPGEVKEEGAGDQGIMFGYACNETPDLMPAPIFYAHKILRMIAEARHSGVEKVLGPDSKSQVTVRYENGKPVGVREIVVSHQHLIPDMTSAQVRERVEPYVREALPKDWITKDTIWHINPTGKFYIGGPDGDTGLTGRKIIVDTYGGAAPHGGGAFSGKDPTKVDRSAAYAARYLAKNIVAAGLADRCTLQLAYAIGVARPLSIYIDTHGTGKVSEDKLEKAAAEVMNLTPRGIRSHLDLNRPIYARTAAYGHFGRTPDNEGGFSWEKTDLAEAFKRAV.

Histidine 17 serves as a coordination point for ATP. Aspartate 19 provides a ligand contact to Mg(2+). Glutamate 52 serves as a coordination point for K(+). Residues glutamate 65 and glutamine 109 each coordinate L-methionine. The segment at 109–119 (QSADIAQGVDA) is flexible loop. ATP contacts are provided by residues 177-179 (DSK), 243-244 (KF), aspartate 252, 258-259 (RK), alanine 275, and lysine 279. An L-methionine-binding site is contributed by aspartate 252. Position 283 (lysine 283) interacts with L-methionine.

The protein belongs to the AdoMet synthase family. In terms of assembly, homotetramer; dimer of dimers. The cofactor is Mg(2+). Requires K(+) as cofactor.

The protein localises to the cytoplasm. The enzyme catalyses L-methionine + ATP + H2O = S-adenosyl-L-methionine + phosphate + diphosphate. The protein operates within amino-acid biosynthesis; S-adenosyl-L-methionine biosynthesis; S-adenosyl-L-methionine from L-methionine: step 1/1. Catalyzes the formation of S-adenosylmethionine (AdoMet) from methionine and ATP. The overall synthetic reaction is composed of two sequential steps, AdoMet formation and the subsequent tripolyphosphate hydrolysis which occurs prior to release of AdoMet from the enzyme. This Bradyrhizobium sp. (strain ORS 278) protein is S-adenosylmethionine synthase.